The chain runs to 69 residues: Protein SlyX homolog (69 aa).

This sequence belongs to the SlyX family.

The chain is Protein SlyX homolog from Pseudomonas aeruginosa (strain LESB58).